Here is a 378-residue protein sequence, read N- to C-terminus: MSGLEAIWWRERPGPLGALAGAPLLLAEAPFRAAAALRGALYDRGVLPAVRAGAPVVSIGNLAVGGAGKTPAALAVAARLAGRGRRVAILSRGYGAARADARVASDGAGALLPAAEAGDEPALLARRLPGVAVLCGPRRAELARTAVEALGADALVLDDGFQHRALARDLDVVVLDASNPFGNGHLLPRGPNREPRTALRRAGLVWLSHADRAAPERLEALRRLARDATGRAPVESRHAPTALLDGALREAGSLEALRGRRVAALSGLARPAGFLRTLEALGAEVALARAFPDHHRFTGGELEAVLRDADAAGCAWVVTTEKDAVRLDAALAAAAADRLRVVRVDAELLRGADVLEAALDAALAAAPQPRPAPRAPVS.

63–70 provides a ligand contact to ATP; it reads AVGGAGKT.

This sequence belongs to the LpxK family.

The enzyme catalyses a lipid A disaccharide + ATP = a lipid IVA + ADP + H(+). It functions in the pathway glycolipid biosynthesis; lipid IV(A) biosynthesis; lipid IV(A) from (3R)-3-hydroxytetradecanoyl-[acyl-carrier-protein] and UDP-N-acetyl-alpha-D-glucosamine: step 6/6. Transfers the gamma-phosphate of ATP to the 4'-position of a tetraacyldisaccharide 1-phosphate intermediate (termed DS-1-P) to form tetraacyldisaccharide 1,4'-bis-phosphate (lipid IVA). This Anaeromyxobacter sp. (strain K) protein is Tetraacyldisaccharide 4'-kinase.